The chain runs to 225 residues: Holliday junction branch migration complex subunit RuvA (225 aa).

The segment at 1-71 (MISWINGDLV…EDSDLLFGFT (71 aa)) is domain I. A domain II region spans residues 72 to 150 (SKDQKNFFIE…SEILSEEEKS (79 aa)). A flexible linker region spans residues 151–161 (KDEFEIKDPEI). The domain III stretch occupies residues 161-225 (IIKMIEDLQL…LDEDSSNKDR (65 aa)).

The protein belongs to the RuvA family. In terms of assembly, homotetramer. Forms an RuvA(8)-RuvB(12)-Holliday junction (HJ) complex. HJ DNA is sandwiched between 2 RuvA tetramers; dsDNA enters through RuvA and exits via RuvB. An RuvB hexamer assembles on each DNA strand where it exits the tetramer. Each RuvB hexamer is contacted by two RuvA subunits (via domain III) on 2 adjacent RuvB subunits; this complex drives branch migration. In the full resolvosome a probable DNA-RuvA(4)-RuvB(12)-RuvC(2) complex forms which resolves the HJ.

It localises to the cytoplasm. Its function is as follows. The RuvA-RuvB-RuvC complex processes Holliday junction (HJ) DNA during genetic recombination and DNA repair, while the RuvA-RuvB complex plays an important role in the rescue of blocked DNA replication forks via replication fork reversal (RFR). RuvA specifically binds to HJ cruciform DNA, conferring on it an open structure. The RuvB hexamer acts as an ATP-dependent pump, pulling dsDNA into and through the RuvAB complex. HJ branch migration allows RuvC to scan DNA until it finds its consensus sequence, where it cleaves and resolves the cruciform DNA. The chain is Holliday junction branch migration complex subunit RuvA from Prochlorococcus marinus (strain AS9601).